The chain runs to 346 residues: Small ribosomal subunit biogenesis GTPase RsgA (346 aa).

The tract at residues Met1–His25 is disordered. Residues Thr7 to Lys20 show a composition bias toward polar residues. In terms of domain architecture, CP-type G spans Glu103–Phe271. Residues Asn159 to Asp162 and Gly213 to Ser221 contribute to the GTP site. Positions 295, 300, 302, and 308 each coordinate Zn(2+).

Belongs to the TRAFAC class YlqF/YawG GTPase family. RsgA subfamily. As to quaternary structure, monomer. Associates with 30S ribosomal subunit, binds 16S rRNA. Requires Zn(2+) as cofactor.

Its subcellular location is the cytoplasm. Its function is as follows. One of several proteins that assist in the late maturation steps of the functional core of the 30S ribosomal subunit. Helps release RbfA from mature subunits. May play a role in the assembly of ribosomal proteins into the subunit. Circularly permuted GTPase that catalyzes slow GTP hydrolysis, GTPase activity is stimulated by the 30S ribosomal subunit. The polypeptide is Small ribosomal subunit biogenesis GTPase RsgA (Haemophilus influenzae (strain ATCC 51907 / DSM 11121 / KW20 / Rd)).